The primary structure comprises 170 residues: Adenine phosphoribosyltransferase (170 aa).

The protein belongs to the purine/pyrimidine phosphoribosyltransferase family. Homodimer.

It localises to the cytoplasm. It carries out the reaction AMP + diphosphate = 5-phospho-alpha-D-ribose 1-diphosphate + adenine. It functions in the pathway purine metabolism; AMP biosynthesis via salvage pathway; AMP from adenine: step 1/1. Its function is as follows. Catalyzes a salvage reaction resulting in the formation of AMP, that is energically less costly than de novo synthesis. This chain is Adenine phosphoribosyltransferase, found in Acaryochloris marina (strain MBIC 11017).